We begin with the raw amino-acid sequence, 337 residues long: Phenylalanine--tRNA ligase alpha subunit (337 aa).

Glu252 is a Mg(2+) binding site.

This sequence belongs to the class-II aminoacyl-tRNA synthetase family. Phe-tRNA synthetase alpha subunit type 1 subfamily. As to quaternary structure, tetramer of two alpha and two beta subunits. Mg(2+) is required as a cofactor.

The protein resides in the cytoplasm. It catalyses the reaction tRNA(Phe) + L-phenylalanine + ATP = L-phenylalanyl-tRNA(Phe) + AMP + diphosphate + H(+). The sequence is that of Phenylalanine--tRNA ligase alpha subunit from Francisella tularensis subsp. mediasiatica (strain FSC147).